We begin with the raw amino-acid sequence, 326 residues long: tRNA N6-adenosine threonylcarbamoyltransferase (326 aa).

Residues His111 and His115 each contribute to the Fe cation site. Residues 134-138, Asp167, Gly180, Asp184, and Asn268 each bind substrate; that span reads TVSGG. Residue Asp293 coordinates Fe cation.

Belongs to the KAE1 / TsaD family. Fe(2+) serves as cofactor.

Its subcellular location is the cytoplasm. It catalyses the reaction L-threonylcarbamoyladenylate + adenosine(37) in tRNA = N(6)-L-threonylcarbamoyladenosine(37) in tRNA + AMP + H(+). Its function is as follows. Required for the formation of a threonylcarbamoyl group on adenosine at position 37 (t(6)A37) in tRNAs that read codons beginning with adenine. Is involved in the transfer of the threonylcarbamoyl moiety of threonylcarbamoyl-AMP (TC-AMP) to the N6 group of A37, together with TsaE and TsaB. TsaD likely plays a direct catalytic role in this reaction. The protein is tRNA N6-adenosine threonylcarbamoyltransferase of Dehalococcoides mccartyi (strain ATCC BAA-2100 / JCM 16839 / KCTC 5957 / BAV1).